Consider the following 215-residue polypeptide: T-complex protein 10A homolog 1 (215 aa).

The segment at 1–25 is disordered; it reads MLAGQLEARDPKEGTHPEDPCPGAG. Residues 7–19 are compositionally biased toward basic and acidic residues; it reads EARDPKEGTHPED. A coiled-coil region spans residues 69 to 110; the sequence is ADVHGKLRSHIDALREQNMELREKLRALQLQRWKARKKSAAS. Residues 75–96 are leucine-zipper; the sequence is LRSHIDALREQNMELREKLRAL. Residues 150-163 are compositionally biased toward polar residues; that stretch reads ATLLGQRSSSNNSA. The disordered stretch occupies residues 150 to 215; sequence ATLLGQRSSS…TPCAERRGGV (66 aa).

Belongs to the TCP10 family. In terms of assembly, self-associates (via leucine zipper). Interacts (via leucine zipper) with ZIPK/DAPK3 (via leucine zipper). Interacts with MAD4. Expressed in liver and testis. Expressed in the seminiferous tubules (at protein level).

The protein localises to the nucleus. In terms of biological role, may be involved in transcriptional regulation. Has in vitro transcription inhibition activity. Acts as a tumor suppressor in hepatocellular carcinoma (HCC) cells. This chain is T-complex protein 10A homolog 1 (TCP10L), found in Homo sapiens (Human).